Reading from the N-terminus, the 214-residue chain is Phosphatidyl-N-methylethanolamine N-methyltransferase (214 aa).

Over 1–19 the chain is Lumenal; sequence MPLVALGVADLFNFVDYSK. Positions 20-40 form an intramembrane region, helical; that stretch reads TSLAISAAAIAFNPTFWNIVA. Residues 41 to 52 are Lumenal-facing; it reads RREYRTKFLTRA. The helical transmembrane segment at 53 to 74 threads the bilayer; that stretch reads FGGNAQVACYFLAVTIFGLGLV. At 75–101 the chain is on the cytoplasmic side; it reads RDFLYERALRDQPSHPLLEGTYVKYAA. The helical transmembrane segment at 102-122 threads the bilayer; sequence YALLALGNLLVITSTMRLGIT. 106-108 is an S-adenosyl-L-methionine binding site; sequence ALG. At 123–165 the chain is on the lumenal side; it reads GTFLGDYFGILMDGIVTGFPFNVTSAPMYYGSTMSFLGTALLY. A helical transmembrane segment spans residues 166 to 186; that stretch reads GKPAGLLLTAWVLFVYIIAIQ. Over 187-214 the chain is Cytoplasmic; that stretch reads FENPFTAEIYAKRDRERAKAAGTSKKEL. Position 188-189 (188-189) interacts with S-adenosyl-L-methionine; sequence EN.

Belongs to the class VI-like SAM-binding methyltransferase superfamily. PEMT/PEM2 methyltransferase family.

Its subcellular location is the endoplasmic reticulum membrane. It is found in the mitochondrion membrane. The catalysed reaction is a 1,2-diacyl-sn-glycero-3-phospho-N-methylethanolamine + S-adenosyl-L-methionine = a 1,2-diacyl-sn-glycero-3-phospho-N,N-dimethylethanolamine + S-adenosyl-L-homocysteine + H(+). The enzyme catalyses a 1,2-diacyl-sn-glycero-3-phospho-N,N-dimethylethanolamine + S-adenosyl-L-methionine = a 1,2-diacyl-sn-glycero-3-phosphocholine + S-adenosyl-L-homocysteine + H(+). It functions in the pathway phospholipid metabolism; phosphatidylcholine biosynthesis. Catalyzes the second two steps of the methylation pathway of phosphatidylcholine biosynthesis, the SAM-dependent methylation of phosphatidylmonomethylethanolamine (PMME) to phosphatidyldimethylethanolamine (PDME) and of PDME to phosphatidylcholine (PC). The sequence is that of Phosphatidyl-N-methylethanolamine N-methyltransferase from Neurospora crassa (strain ATCC 24698 / 74-OR23-1A / CBS 708.71 / DSM 1257 / FGSC 987).